A 133-amino-acid chain; its full sequence is ATP synthase epsilon chain, chloroplastic (133 aa).

The protein belongs to the ATPase epsilon chain family. In terms of assembly, F-type ATPases have 2 components, CF(1) - the catalytic core - and CF(0) - the membrane proton channel. CF(1) has five subunits: alpha(3), beta(3), gamma(1), delta(1), epsilon(1). CF(0) has three main subunits: a, b and c.

It is found in the plastid. It localises to the chloroplast thylakoid membrane. Produces ATP from ADP in the presence of a proton gradient across the membrane. The protein is ATP synthase epsilon chain, chloroplastic of Gossypium barbadense (Sea Island cotton).